The primary structure comprises 842 residues: uncharacterized protein (842 aa).

Disordered stretches follow at residues 1 to 20 (MLHF…SPKE) and 142 to 209 (NSSS…TSSS). A uDENN FNIP1/2-type domain is found at 35 to 422 (TKDVTFRLVL…TAKSFHKCIL (388 aa)). Polar residues predominate over residues 183-209 (ANLSSSSKNMKDSTLSSQKARSNTSSS). In terms of domain architecture, cDENN FNIP1/2-type spans 430-772 (APLIKPSVFS…CYEIHEFPSE (343 aa)). A phosphoserine mark is found at Ser-573 and Ser-590. In terms of domain architecture, dDENN FNIP1/2-type spans 777 to 842 (YAPFLLKEHH…KEVLRVCSHC (66 aa)).

The protein resides in the cytoplasm. This is an uncharacterized protein from Schizosaccharomyces pombe (strain 972 / ATCC 24843) (Fission yeast).